The chain runs to 81 residues: UPF0181 protein Spro_2806 (81 aa).

A disordered region spans residues 43 to 81 (EKHQGDQVSVMFDDEDDDEEYQERPDDQADDDSEEDENY). 2 stretches are compositionally biased toward acidic residues: residues 54-63 (FDDEDDDEEY) and 70-81 (QADDDSEEDENY).

It belongs to the UPF0181 family.

This chain is UPF0181 protein Spro_2806, found in Serratia proteamaculans (strain 568).